We begin with the raw amino-acid sequence, 509 residues long: MVDGAMILSVLMMMALPSPSMEDEEPKVNPKLYMCVCEGLSCGNEDHCEGQQCFSSLSVNDGFRVYQKGCFQVYEQGKMTCKTPPSPGQAVECCQGDWCNRNVTARLPTKGKSFPGSQNFHLEVGLIILSVVFAVCLFACILGVALRKFKRRNQERLNPRDVEYGTIEGLITTNVGDSTLAELLDHSCTSGSGSGLPFLVQRTVARQITLLECVGKGRYGEVWRGSWQGENVAVKIFSSRDEKSWFRETELYNTVMLRHENILGFIASDMTSRHSSTQLWLITHYHEMGSLYDYLQLTTLDTVSCLRIVLSIASGLAHLHIEIFGTQGKSAIAHRDLKSKNILVKKNGQCCIADLGLAVMHSQSTNQLDVGNNPRVGTKRYMAPEVLDETIQVDCFDSYKRVDIWAFGLVLWEVARRMVSNGIVEDYKPPFYDVVPNDPSFEDMRKVVCVDQQRPNIPNRWFSDPTLTSLAKLMKECWYQNPSARLTALRIKKTLTKIDNSLDKLKTDC.

Positions 1-20 (MVDGAMILSVLMMMALPSPS) are cleaved as a signal peptide. At 21–123 (MEDEEPKVNP…FPGSQNFHLE (103 aa)) the chain is on the extracellular side. N-linked (GlcNAc...) asparagine glycosylation is present at N102. Residues 124–146 (VGLIILSVVFAVCLFACILGVAL) form a helical membrane-spanning segment. The Cytoplasmic segment spans residues 147-509 (RKFKRRNQER…NSLDKLKTDC (363 aa)). A GS domain is found at 178-207 (STLAELLDHSCTSGSGSGLPFLVQRTVARQ). A Protein kinase domain is found at 208–502 (ITLLECVGKG…KTLTKIDNSL (295 aa)). Residues 214-222 (VGKGRYGEV) and K235 each bind ATP. D336 serves as the catalytic Proton acceptor. S501 bears the Phosphoserine mark.

The protein belongs to the protein kinase superfamily. TKL Ser/Thr protein kinase family. TGFB receptor subfamily. In terms of assembly, interacts with FKBP1A. Interacts with FCHO1. Interacts with CLU. Interacts with type II receptors AMHR2 and ACVR2A. Interacts with BMP7. Interacts with GDF2/BMP9. Interacts with BMP6 (when glycosylated); the interaction may induce HAMP expression. Interacts with TSC22D1/TSC-22. Mg(2+) is required as a cofactor. Mn(2+) serves as cofactor. Urogenital ridge, testis, ovary, brain and lungs.

The protein localises to the membrane. It catalyses the reaction L-threonyl-[receptor-protein] + ATP = O-phospho-L-threonyl-[receptor-protein] + ADP + H(+). It carries out the reaction L-seryl-[receptor-protein] + ATP = O-phospho-L-seryl-[receptor-protein] + ADP + H(+). Bone morphogenetic protein (BMP) type I receptor that is involved in a wide variety of biological processes, including bone, heart, cartilage, nervous, and reproductive system development and regulation. As a type I receptor, forms heterotetrameric receptor complexes with the type II receptors AMHR2, ACVR2A ors ACVR2B. Upon binding of ligands such as BMP7 or GDF2/BMP9 to the heteromeric complexes, type II receptors transphosphorylate ACVR1 intracellular domain. In turn, ACVR1 kinase domain is activated and subsequently phosphorylates SMAD1/5/8 proteins that transduce the signal. In addition to its role in mediating BMP pathway-specific signaling, suppresses TGFbeta/activin pathway signaling by interfering with the binding of activin to its type II receptor. Besides canonical SMAD signaling, can activate non-canonical pathways such as p38 mitogen-activated protein kinases/MAPKs. May promote the expression of HAMP, potentially via its interaction with BMP6. This chain is Activin receptor type-1 (Acvr1), found in Rattus norvegicus (Rat).